The following is a 223-amino-acid chain: N-terminal Xaa-Pro-Lys N-methyltransferase 1-B (223 aa).

Residues G69, R74, 91-93 (DVT), 119-120 (LQ), and Q135 each bind S-adenosyl-L-methionine.

This sequence belongs to the methyltransferase superfamily. NTM1 family.

The protein localises to the nucleus. The enzyme catalyses N-terminal L-alanyl-L-prolyl-L-lysyl-[protein] + 3 S-adenosyl-L-methionine = N-terminal N,N,N-trimethyl-L-alanyl-L-prolyl-L-lysyl-[protein] + 3 S-adenosyl-L-homocysteine + 3 H(+). The catalysed reaction is N-terminal L-seryl-L-prolyl-L-lysyl-[protein] + 3 S-adenosyl-L-methionine = N-terminal N,N,N-trimethyl-L-seryl-L-prolyl-L-lysyl-[protein] + 3 S-adenosyl-L-homocysteine + 3 H(+). It carries out the reaction N-terminal L-prolyl-L-prolyl-L-lysyl-[protein] + 2 S-adenosyl-L-methionine = N-terminal N,N-dimethyl-L-prolyl-L-prolyl-L-lysyl-[protein] + 2 S-adenosyl-L-homocysteine + 2 H(+). Its function is as follows. Distributive alpha-N-methyltransferase that methylates the N-terminus of target proteins containing the N-terminal motif [Ala/Gly/Pro/Ser]-Pro-Lys when the initiator Met is cleaved. Specifically catalyzes mono-, di- or tri-methylation of the exposed alpha-amino group of the Ala, Gly or Ser residue in the [Ala/Gly/Ser]-Pro-Lys motif and mono- or di-methylation of Pro in the Pro-Pro-Lys motif. Required during mitosis for normal bipolar spindle formation and chromosome segregation via its action on target proteins. In Xenopus laevis (African clawed frog), this protein is N-terminal Xaa-Pro-Lys N-methyltransferase 1-B (ntmt1-b).